The sequence spans 77 residues: Conotoxin Ar5.1 b (77 aa).

Positions 1 to 19 (MLCLPVFIILLLLASPAAS) are cleaved as a signal peptide. A propeptide spanning residues 20–44 (NPLKTRIQSDLIRAALEDADMKNEK) is cleaved from the precursor.

The protein belongs to the conotoxin T superfamily. Post-translationally, contains 2 disulfide bonds that can be either 'C1-C3, C2-C4' or 'C1-C4, C2-C3', since these disulfide connectivities have been observed for conotoxins with cysteine framework V (for examples, see AC P0DQQ7 and AC P81755). Expressed by the venom duct.

The protein resides in the secreted. This is Conotoxin Ar5.1 b from Conus arenatus (Sand-dusted cone).